A 460-amino-acid chain; its full sequence is Phosphoglucomutase (460 aa).

Ser-103 serves as the catalytic Phosphoserine intermediate. A Mg(2+)-binding site is contributed by Ser-103. Substrate is bound by residues 103-104 and Lys-113; that span reads SH. The Mg(2+) site is built by Asp-239, Asp-241, and Asp-243. Substrate is bound by residues 243–244, Thr-303, and 322–324; these read DR and EMS.

Belongs to the phosphohexose mutase family. Mg(2+) is required as a cofactor.

Its subcellular location is the cytoplasm. It catalyses the reaction alpha-D-glucose 1-phosphate = alpha-D-glucose 6-phosphate. This enzyme participates in both the breakdown and synthesis of glucose. In Neisseria meningitidis serogroup B (strain ATCC BAA-335 / MC58), this protein is Phosphoglucomutase (pgm).